The following is a 518-amino-acid chain: Putative malate dehydrogenase 1B (518 aa).

It belongs to the LDH/MDH superfamily. MDH type 2 family.

This chain is Putative malate dehydrogenase 1B (MDH1B), found in Homo sapiens (Human).